The following is a 168-amino-acid chain: Endoribonuclease YbeY (168 aa).

Positions 126, 130, and 136 each coordinate Zn(2+).

It belongs to the endoribonuclease YbeY family. It depends on Zn(2+) as a cofactor.

The protein localises to the cytoplasm. Single strand-specific metallo-endoribonuclease involved in late-stage 70S ribosome quality control and in maturation of the 3' terminus of the 16S rRNA. The protein is Endoribonuclease YbeY of Rhizobium meliloti (strain 1021) (Ensifer meliloti).